We begin with the raw amino-acid sequence, 155 residues long: Cyanate hydratase (155 aa).

Active-site residues include Arg92, Glu95, and Ser118.

Belongs to the cyanase family.

It carries out the reaction cyanate + hydrogencarbonate + 3 H(+) = NH4(+) + 2 CO2. Its function is as follows. Catalyzes the reaction of cyanate with bicarbonate to produce ammonia and carbon dioxide. This Mycobacterium avium (strain 104) protein is Cyanate hydratase.